The following is a 190-amino-acid chain: UPF0398 protein LAR_0869 (190 aa).

The protein belongs to the UPF0398 family.

The protein is UPF0398 protein LAR_0869 of Limosilactobacillus reuteri subsp. reuteri (strain JCM 1112) (Lactobacillus reuteri).